Consider the following 1207-residue polypeptide: DNA-directed RNA polymerase subunit beta' (1207 aa).

Zn(2+) is bound by residues cysteine 60, cysteine 62, cysteine 75, and cysteine 78. Mg(2+)-binding residues include aspartate 450, aspartate 452, and aspartate 454. Zn(2+) is bound by residues cysteine 818, cysteine 892, cysteine 899, and cysteine 902.

It belongs to the RNA polymerase beta' chain family. As to quaternary structure, the RNAP catalytic core consists of 2 alpha, 1 beta, 1 beta' and 1 omega subunit. When a sigma factor is associated with the core the holoenzyme is formed, which can initiate transcription. The cofactor is Mg(2+). Requires Zn(2+) as cofactor.

It catalyses the reaction RNA(n) + a ribonucleoside 5'-triphosphate = RNA(n+1) + diphosphate. Functionally, DNA-dependent RNA polymerase catalyzes the transcription of DNA into RNA using the four ribonucleoside triphosphates as substrates. The sequence is that of DNA-directed RNA polymerase subunit beta' from Lactococcus lactis subsp. cremoris (strain MG1363).